Here is a 760-residue protein sequence, read N- to C-terminus: ATP-dependent zinc metalloprotease FtsH (760 aa).

Residues 1–5 (MNRKN) lie on the Cytoplasmic side of the membrane. The helical transmembrane segment at 6–26 (VTRTITAIAVVVLLGWSFFYF) threads the bilayer. The Extracellular portion of the chain corresponds to 27 to 110 (SDDTRGYKPV…KVSTVVNQGS (84 aa)). Residues 111 to 131 (ILGELLVYVLPLLLLVGLFVM) form a helical membrane-spanning segment. The Cytoplasmic portion of the chain corresponds to 132 to 760 (FSRMQGGARM…EVSRTKPAHG (629 aa)). 203-210 (GPPGTGKT) provides a ligand contact to ATP. Position 425 (His-425) interacts with Zn(2+). Glu-426 is a catalytic residue. Zn(2+) is bound by residues His-429 and Asp-501. The interval 616–760 (DFGGRIPSDK…EVSRTKPAHG (145 aa)) is disordered. The span at 650-669 (AFKAAIAQATQAAEAARSDA) shows a compositional bias: low complexity. The segment covering 740 to 750 (GSDESSAEQDD) has biased composition (acidic residues).

It in the central section; belongs to the AAA ATPase family. In the C-terminal section; belongs to the peptidase M41 family. In terms of assembly, homohexamer. Zn(2+) is required as a cofactor.

The protein resides in the cell membrane. Functionally, acts as a processive, ATP-dependent zinc metallopeptidase for both cytoplasmic and membrane proteins. Plays a role in the quality control of integral membrane proteins. The protein is ATP-dependent zinc metalloprotease FtsH of Mycobacterium bovis (strain ATCC BAA-935 / AF2122/97).